The sequence spans 478 residues: Cytochrome c-552 (478 aa).

The first 26 residues, Met-1–Ala-26, serve as a signal peptide directing secretion. Heme c is bound at residue His-94. The heme site is built by Cys-122, Cys-125, and Lys-126. Residues Cys-160, Cys-163, His-164, Cys-209, Cys-212, and His-213 each coordinate heme c. Glu-215, Tyr-216, Lys-261, and Gln-263 together coordinate Ca(2+). Position 216 (Tyr-216) interacts with substrate. His-264 is a substrate binding site. His-275, Cys-282, Cys-285, His-286, His-301, Cys-314, Cys-317, His-318, and His-393 together coordinate heme c.

It belongs to the cytochrome c-552 family. The cofactor is Ca(2+). It depends on heme c as a cofactor.

The protein resides in the periplasm. The enzyme catalyses 6 Fe(III)-[cytochrome c] + NH4(+) + 2 H2O = 6 Fe(II)-[cytochrome c] + nitrite + 8 H(+). It participates in nitrogen metabolism; nitrate reduction (assimilation). Functionally, catalyzes the reduction of nitrite to ammonia, consuming six electrons in the process. The protein is Cytochrome c-552 of Salmonella schwarzengrund (strain CVM19633).